The chain runs to 330 residues: Small ribosomal subunit protein uS15m (330 aa).

Belongs to the universal ribosomal protein uS15 family. In terms of assembly, component of the mitochondrial ribosome small subunit (28S) which comprises a 12S rRNA and about 30 distinct proteins.

The protein localises to the mitochondrion. The chain is Small ribosomal subunit protein uS15m (mrps-15) from Caenorhabditis elegans.